Reading from the N-terminus, the 294-residue chain is tRNA dimethylallyltransferase (294 aa).

Residue 11 to 18 coordinates ATP; that stretch reads GPTAVGKT. 13–18 provides a ligand contact to substrate; the sequence is TAVGKT. Residues 36 to 39 are interaction with substrate tRNA; it reads DSQQ.

The protein belongs to the IPP transferase family. In terms of assembly, monomer. Mg(2+) serves as cofactor.

It carries out the reaction adenosine(37) in tRNA + dimethylallyl diphosphate = N(6)-dimethylallyladenosine(37) in tRNA + diphosphate. Catalyzes the transfer of a dimethylallyl group onto the adenine at position 37 in tRNAs that read codons beginning with uridine, leading to the formation of N6-(dimethylallyl)adenosine (i(6)A). In Lactococcus lactis subsp. cremoris (strain SK11), this protein is tRNA dimethylallyltransferase.